The sequence spans 443 residues: CBL-interacting protein kinase 29 (443 aa).

Positions 32-292 (YELGGLLGRG…TEEIITHPWF (261 aa)) constitute a Protein kinase domain. ATP contacts are provided by residues 38-46 (LGRGASAKV) and K61. D164 acts as the Proton acceptor in catalysis. The tract at residues 182–207 (DFGLGAVADGALHHTLCGTPAYVAPE) is activation loop. Residues 313–347 (AKFKTEFKEDDMARDMTAFDILACSPGSDLSGLFG) form the NAF domain. The PPI stretch occupies residues 350–379 (PGKERVFVGEPAAAVLSRVEEAGKKEGYMV).

The protein belongs to the protein kinase superfamily. CAMK Ser/Thr protein kinase family. SNF1 subfamily. Mn(2+) is required as a cofactor.

It carries out the reaction L-seryl-[protein] + ATP = O-phospho-L-seryl-[protein] + ADP + H(+). The catalysed reaction is L-threonyl-[protein] + ATP = O-phospho-L-threonyl-[protein] + ADP + H(+). CIPK serine-threonine protein kinases interact with CBL proteins. Binding of a CBL protein to the regulatory NAF domain of CIPK protein lead to the activation of the kinase in a calcium-dependent manner. The protein is CBL-interacting protein kinase 29 (CIPK29) of Oryza sativa subsp. japonica (Rice).